A 152-amino-acid chain; its full sequence is Lipoprotein signal peptidase (152 aa).

The next 3 membrane-spanning stretches (helical) occupy residues 5–25, 61–81, and 84–104; these read LFVL…FWIV, WFFV…LATH, and LNIW…GNFI. Residues Asp114 and Asp130 contribute to the active site. The chain crosses the membrane as a helical span at residues 125 to 145; sequence IFNVADSYLTVGVILLVICLW.

Belongs to the peptidase A8 family.

It is found in the cell membrane. The catalysed reaction is Release of signal peptides from bacterial membrane prolipoproteins. Hydrolyzes -Xaa-Yaa-Zaa-|-(S,diacylglyceryl)Cys-, in which Xaa is hydrophobic (preferably Leu), and Yaa (Ala or Ser) and Zaa (Gly or Ala) have small, neutral side chains.. It participates in protein modification; lipoprotein biosynthesis (signal peptide cleavage). In terms of biological role, this protein specifically catalyzes the removal of signal peptides from prolipoproteins. This is Lipoprotein signal peptidase from Streptococcus pyogenes serotype M2 (strain MGAS10270).